The chain runs to 92 residues: Acylphosphatase (92 aa).

An Acylphosphatase-like domain is found at 5 to 92 (QVQLFVRGRV…GDFFDFRITD (88 aa)). Residues Arg20 and Asn38 contribute to the active site.

It belongs to the acylphosphatase family.

The catalysed reaction is an acyl phosphate + H2O = a carboxylate + phosphate + H(+). The polypeptide is Acylphosphatase (acyP) (Sorangium cellulosum (strain So ce56) (Polyangium cellulosum (strain So ce56))).